We begin with the raw amino-acid sequence, 333 residues long: Bifunctional phosphoglucose/phosphomannose isomerase (333 aa).

In terms of domain architecture, SIS spans 22 to 160 (LEGALEGVEE…SGALGVDLEA (139 aa)). The D-fructose 6-phosphate site is built by Gly39, Ser40, Ser84, Ser86, Thr89, and Arg136. Glu211 functions as the Proton acceptor in the catalytic mechanism. The D-fructose 6-phosphate site is built by His227 and Lys322. Catalysis depends on His227, which acts as the Proton donor. Lys322 functions as the Proton acceptor in the catalytic mechanism.

It belongs to the PGI/PMI family. Homodimer.

The enzyme catalyses alpha-D-glucose 6-phosphate = beta-D-fructose 6-phosphate. The catalysed reaction is D-mannose 6-phosphate = D-fructose 6-phosphate. With respect to regulation, inhibited by low concentrations of erythrose 4-phosphate and 6-phosphogluconate. Its function is as follows. Dual specificity isomerase that catalyzes the isomerization of both glucose-6-phosphate and mannose-6-phosphate to fructose-6-phosphate with similar catalytic efficiency. The sequence is that of Bifunctional phosphoglucose/phosphomannose isomerase from Aeropyrum pernix (strain ATCC 700893 / DSM 11879 / JCM 9820 / NBRC 100138 / K1).